A 496-amino-acid chain; its full sequence is Glutamyl-tRNA(Gln) amidotransferase subunit A (496 aa).

Active-site charge relay system residues include lysine 75 and serine 150. Residue serine 174 is the Acyl-ester intermediate of the active site.

Belongs to the amidase family. GatA subfamily. As to quaternary structure, heterotrimer of A, B and C subunits.

The enzyme catalyses L-glutamyl-tRNA(Gln) + L-glutamine + ATP + H2O = L-glutaminyl-tRNA(Gln) + L-glutamate + ADP + phosphate + H(+). In terms of biological role, allows the formation of correctly charged Gln-tRNA(Gln) through the transamidation of misacylated Glu-tRNA(Gln) in organisms which lack glutaminyl-tRNA synthetase. The reaction takes place in the presence of glutamine and ATP through an activated gamma-phospho-Glu-tRNA(Gln). In Burkholderia vietnamiensis (strain G4 / LMG 22486) (Burkholderia cepacia (strain R1808)), this protein is Glutamyl-tRNA(Gln) amidotransferase subunit A.